The following is a 157-amino-acid chain: 2-C-methyl-D-erythritol 2,4-cyclodiphosphate synthase (157 aa).

A divalent metal cation contacts are provided by Asp-8 and His-10. 4-CDP-2-C-methyl-D-erythritol 2-phosphate-binding positions include 8-10 (DVH) and 34-35 (HS). His-42 contacts a divalent metal cation. 4-CDP-2-C-methyl-D-erythritol 2-phosphate contacts are provided by residues 56 to 58 (DIG), 61 to 65 (FPDTD), 100 to 106 (AQKPKMA), 132 to 135 (TTTE), and Phe-139.

This sequence belongs to the IspF family. In terms of assembly, homotrimer. It depends on a divalent metal cation as a cofactor.

The catalysed reaction is 4-CDP-2-C-methyl-D-erythritol 2-phosphate = 2-C-methyl-D-erythritol 2,4-cyclic diphosphate + CMP. The protein operates within isoprenoid biosynthesis; isopentenyl diphosphate biosynthesis via DXP pathway; isopentenyl diphosphate from 1-deoxy-D-xylulose 5-phosphate: step 4/6. Its function is as follows. Involved in the biosynthesis of isopentenyl diphosphate (IPP) and dimethylallyl diphosphate (DMAPP), two major building blocks of isoprenoid compounds. Catalyzes the conversion of 4-diphosphocytidyl-2-C-methyl-D-erythritol 2-phosphate (CDP-ME2P) to 2-C-methyl-D-erythritol 2,4-cyclodiphosphate (ME-CPP) with a corresponding release of cytidine 5-monophosphate (CMP). In Alkaliphilus oremlandii (strain OhILAs) (Clostridium oremlandii (strain OhILAs)), this protein is 2-C-methyl-D-erythritol 2,4-cyclodiphosphate synthase.